The primary structure comprises 531 residues: Na(+)/H(+) antiporter NhaB (531 aa).

12 consecutive transmembrane segments (helical) span residues 13–33 (FLGK…IINP), 34–54 (LVFF…EFIF), 90–110 (LVAN…IYFM), 121–141 (ILIG…TAAF), 145–165 (FLDA…FYAI), 206–226 (LLMH…VGEP), 242–262 (FIIR…LTCV), 308–328 (VIAV…GLIG), 352–372 (EEAL…AVII), 394–414 (LALF…VFVG), 456–476 (GQAA…QLSY), and 482–502 (MALP…SFLL).

It belongs to the NhaB Na(+)/H(+) (TC 2.A.34) antiporter family.

It localises to the cell inner membrane. It carries out the reaction 2 Na(+)(in) + 3 H(+)(out) = 2 Na(+)(out) + 3 H(+)(in). Functionally, na(+)/H(+) antiporter that extrudes sodium in exchange for external protons. The chain is Na(+)/H(+) antiporter NhaB from Aliivibrio salmonicida (strain LFI1238) (Vibrio salmonicida (strain LFI1238)).